A 94-amino-acid chain; its full sequence is Large ribosomal subunit protein uL23 (94 aa).

Belongs to the universal ribosomal protein uL23 family. As to quaternary structure, part of the 50S ribosomal subunit. Contacts protein L29, and trigger factor when it is bound to the ribosome.

One of the early assembly proteins it binds 23S rRNA. One of the proteins that surrounds the polypeptide exit tunnel on the outside of the ribosome. Forms the main docking site for trigger factor binding to the ribosome. This chain is Large ribosomal subunit protein uL23, found in Dehalococcoides mccartyi (strain ATCC BAA-2266 / KCTC 15142 / 195) (Dehalococcoides ethenogenes (strain 195)).